The sequence spans 932 residues: Isoleucine--tRNA ligase (932 aa).

Residues 57 to 67 (PYANGDIHMGH) carry the 'HIGH' region motif. E556 provides a ligand contact to L-isoleucyl-5'-AMP. Positions 597–601 (KMSKS) match the 'KMSKS' region motif. K600 is an ATP binding site. 4 residues coordinate Zn(2+): C891, C894, C911, and C914.

The protein belongs to the class-I aminoacyl-tRNA synthetase family. IleS type 1 subfamily. In terms of assembly, monomer. Requires Zn(2+) as cofactor.

The protein resides in the cytoplasm. The catalysed reaction is tRNA(Ile) + L-isoleucine + ATP = L-isoleucyl-tRNA(Ile) + AMP + diphosphate. Catalyzes the attachment of isoleucine to tRNA(Ile). As IleRS can inadvertently accommodate and process structurally similar amino acids such as valine, to avoid such errors it has two additional distinct tRNA(Ile)-dependent editing activities. One activity is designated as 'pretransfer' editing and involves the hydrolysis of activated Val-AMP. The other activity is designated 'posttransfer' editing and involves deacylation of mischarged Val-tRNA(Ile). The sequence is that of Isoleucine--tRNA ligase from Lactiplantibacillus plantarum (strain ATCC BAA-793 / NCIMB 8826 / WCFS1) (Lactobacillus plantarum).